We begin with the raw amino-acid sequence, 260 residues long: NAD kinase (260 aa).

Aspartate 54 (proton acceptor) is an active-site residue. NAD(+)-binding positions include 54–55 (DG), 123–124 (ND), arginine 150, aspartate 152, and 163–168 (TAYSLS).

This sequence belongs to the NAD kinase family. Requires a divalent metal cation as cofactor.

It localises to the cytoplasm. The enzyme catalyses NAD(+) + ATP = ADP + NADP(+) + H(+). In terms of biological role, involved in the regulation of the intracellular balance of NAD and NADP, and is a key enzyme in the biosynthesis of NADP. Catalyzes specifically the phosphorylation on 2'-hydroxyl of the adenosine moiety of NAD to yield NADP. This Caldicellulosiruptor saccharolyticus (strain ATCC 43494 / DSM 8903 / Tp8T 6331) protein is NAD kinase.